A 228-amino-acid polypeptide reads, in one-letter code: Trichome differentiation protein GL1 (228 aa).

HTH myb-type domains follow at residues N11 to L63 and S64 to L118. 2 DNA-binding regions (H-T-H motif) span residues W39–L63 and W91–L114.

As to quaternary structure, homodimer and heterodimer with MYB82. Interacts directly with GL3 and BHLH2. Part of a complex made of GL1, GL3 or BHLH2, and TTG1. Also interacts with BHLH2/EGL3/MYC146 and BHLH12/MYC1. Interacts with MYB82. As to expression, expressed in leaves, stems and flowers. Expressed in trichome cells and in leaf primordia.

Its subcellular location is the nucleus. In terms of biological role, transcription activator, when associated with BHLH2/EGL3/MYC146 or BHLH12/MYC1. Involved in epidermal cell fate specification in leaves. Together with TTG1 and GL3, promotes trichome formation and endoreplication. Regulates the production of a signal that induces hair (trichome) precursor cells on leaf primordia to differentiate. Binds to the WER-binding sites (WBS) promoter regions and activates the transcription of target genes. The protein is Trichome differentiation protein GL1 of Arabidopsis thaliana (Mouse-ear cress).